We begin with the raw amino-acid sequence, 695 residues long: UvrABC system protein B (695 aa).

In terms of domain architecture, Helicase ATP-binding spans 31–414; that stretch reads EGIESGLSFQ…EIQRSGQIAE (384 aa). An ATP-binding site is contributed by 44–51; it reads GVTGSGKT. The Beta-hairpin signature appears at 97 to 120; that stretch reads YYDYYQPEAYVPSRDLFIEKDSSI. One can recognise a Helicase C-terminal domain in the interval 435–601; the sequence is QVDDLMSEVS…GVNKRIKDLI (167 aa). The 36-residue stretch at 632 to 667 folds into the UVR domain; sequence AKEIQRLEKSMLEAARNMEFEQAAQYRDEIKNLRSK.

Belongs to the UvrB family. Forms a heterotetramer with UvrA during the search for lesions. Interacts with UvrC in an incision complex.

The protein resides in the cytoplasm. Functionally, the UvrABC repair system catalyzes the recognition and processing of DNA lesions. A damage recognition complex composed of 2 UvrA and 2 UvrB subunits scans DNA for abnormalities. Upon binding of the UvrA(2)B(2) complex to a putative damaged site, the DNA wraps around one UvrB monomer. DNA wrap is dependent on ATP binding by UvrB and probably causes local melting of the DNA helix, facilitating insertion of UvrB beta-hairpin between the DNA strands. Then UvrB probes one DNA strand for the presence of a lesion. If a lesion is found the UvrA subunits dissociate and the UvrB-DNA preincision complex is formed. This complex is subsequently bound by UvrC and the second UvrB is released. If no lesion is found, the DNA wraps around the other UvrB subunit that will check the other stand for damage. In Nitrosomonas europaea (strain ATCC 19718 / CIP 103999 / KCTC 2705 / NBRC 14298), this protein is UvrABC system protein B.